A 422-amino-acid chain; its full sequence is Oxysterol-binding protein 7 (422 aa).

The tract at residues 283 to 313 is disordered; it reads EAAPASSASKKEKKKEKKKAKHSKHTCSPSD. Over residues 293 to 307 the composition is skewed to basic residues; the sequence is KEKKKEKKKAKHSKH. A coiled-coil region spans residues 354-384; the sequence is MQAADQIKKEIEDEQRKRLQITKEEEKKERA. Residues 402–422 are disordered; sequence TLAPVSNSTSSTASDAASGSN. Residues 407–422 show a composition bias toward low complexity; the sequence is SNSTSSTASDAASGSN.

It belongs to the OSBP family.

This Dictyostelium discoideum (Social amoeba) protein is Oxysterol-binding protein 7 (osbG).